Reading from the N-terminus, the 452-residue chain is Phenylalanine-4-hydroxylase (452 aa).

Residue S16 is modified to Phosphoserine; by PKA. The region spanning 36 to 114 (SLIFSLKEEV…TVHELSRDKK (79 aa)) is the ACT domain. Residues H285, H290, and E330 each coordinate Fe cation.

The protein belongs to the biopterin-dependent aromatic amino acid hydroxylase family. As to quaternary structure, homodimer and homotetramer. Fe(2+) serves as cofactor. Post-translationally, phosphorylation at Ser-16 increases basal activity and facilitates activation by the substrate phenylalanine.

It catalyses the reaction (6R)-L-erythro-5,6,7,8-tetrahydrobiopterin + L-phenylalanine + O2 = (4aS,6R)-4a-hydroxy-L-erythro-5,6,7,8-tetrahydrobiopterin + L-tyrosine. Its pathway is amino-acid degradation; L-phenylalanine degradation; acetoacetate and fumarate from L-phenylalanine: step 1/6. N-terminal region of PAH is thought to contain allosteric binding sites for phenylalanine and to constitute an 'inhibitory' domain that regulates the activity of a catalytic domain in the C-terminal portion of the molecule. Its function is as follows. Catalyzes the hydroxylation of L-phenylalanine to L-tyrosine. This chain is Phenylalanine-4-hydroxylase (PAH), found in Homo sapiens (Human).